A 325-amino-acid chain; its full sequence is Undecaprenyl-phosphate 4-deoxy-4-formamido-L-arabinose transferase (325 aa).

2 helical membrane-spanning segments follow: residues 236-256 (LSIF…LLIL) and 270-290 (VFTL…GMGL).

It belongs to the glycosyltransferase 2 family.

Its subcellular location is the cell inner membrane. The enzyme catalyses UDP-4-deoxy-4-formamido-beta-L-arabinose + di-trans,octa-cis-undecaprenyl phosphate = 4-deoxy-4-formamido-alpha-L-arabinopyranosyl di-trans,octa-cis-undecaprenyl phosphate + UDP. It functions in the pathway glycolipid biosynthesis; 4-amino-4-deoxy-alpha-L-arabinose undecaprenyl phosphate biosynthesis; 4-amino-4-deoxy-alpha-L-arabinose undecaprenyl phosphate from UDP-4-deoxy-4-formamido-beta-L-arabinose and undecaprenyl phosphate: step 1/2. It participates in bacterial outer membrane biogenesis; lipopolysaccharide biosynthesis. Catalyzes the transfer of 4-deoxy-4-formamido-L-arabinose from UDP to undecaprenyl phosphate. The modified arabinose is attached to lipid A and is required for resistance to polymyxin and cationic antimicrobial peptides. The polypeptide is Undecaprenyl-phosphate 4-deoxy-4-formamido-L-arabinose transferase (Edwardsiella ictaluri (strain 93-146)).